The primary structure comprises 88 residues: Small ribosomal subunit protein bS16 (88 aa).

This sequence belongs to the bacterial ribosomal protein bS16 family.

In Symbiobacterium thermophilum (strain DSM 24528 / JCM 14929 / IAM 14863 / T), this protein is Small ribosomal subunit protein bS16.